The following is a 145-amino-acid chain: Protein SprT-like (145 aa).

The SprT-like domain occupies 4 to 140 (TNYVQEVSLA…VCGNCHGKLI (137 aa)). His64 is a binding site for Zn(2+). Glu65 is a catalytic residue. His68 is a binding site for Zn(2+).

This sequence belongs to the SprT family. Zn(2+) serves as cofactor.

It localises to the cytoplasm. This Streptococcus pyogenes serotype M18 (strain MGAS8232) protein is Protein SprT-like.